The chain runs to 295 residues: Acetylglutamate kinase (295 aa).

Substrate is bound by residues 66–67 (GG), arginine 88, and asparagine 193.

Belongs to the acetylglutamate kinase family. ArgB subfamily.

Its subcellular location is the cytoplasm. It catalyses the reaction N-acetyl-L-glutamate + ATP = N-acetyl-L-glutamyl 5-phosphate + ADP. It participates in amino-acid biosynthesis; L-arginine biosynthesis; N(2)-acetyl-L-ornithine from L-glutamate: step 2/4. Its function is as follows. Catalyzes the ATP-dependent phosphorylation of N-acetyl-L-glutamate. The chain is Acetylglutamate kinase from Afipia carboxidovorans (strain ATCC 49405 / DSM 1227 / KCTC 32145 / OM5) (Oligotropha carboxidovorans).